A 1857-amino-acid chain; its full sequence is Phosphatidylinositol 3-kinase 2 (1857 aa).

Low complexity-rich tracts occupy residues 1 to 32 (MKMS…SNGS) and 42 to 55 (NLSV…SNNS). 5 disordered regions span residues 1–61 (MKMS…KSST), 145–313 (TPLN…TNRV), 348–468 (SSSK…NSIR), 481–512 (ISSN…GERV), and 530–573 (ESDI…GPNV). Residues 145–155 (TPLNRSRSGSI) are compositionally biased toward polar residues. Positions 162 to 269 (NNLTSSSSSS…NNNNNNNSNS (108 aa)) are enriched in low complexity. The segment covering 270–281 (GGSSRMITSKSQ) has biased composition (polar residues). Composition is skewed to low complexity over residues 288 to 311 (TSNT…TPTN) and 352 to 464 (LLIP…QPSN). The segment covering 533 to 560 (ISSSPRSIGSPNSIRASISSQLPPSLSS) has biased composition (low complexity). Gly residues predominate over residues 561 to 570 (IGGGGGGGSG). One can recognise a PI3K-RBD domain in the interval 821–934 (PNKITIMVLL…NQTVELSLTN (114 aa)). A disordered region spans residues 996–1078 (KETNKENKDS…SGSGNGSEQP (83 aa)). The span at 997-1011 (ETNKENKDSNKENKD) shows a compositional bias: basic and acidic residues. Residues 1012 to 1056 (SSSNNNNNNNNNNNNNNNNNNNNNNNNNNNGNNNGNNSNNNSNSN) are compositionally biased toward low complexity. The 173-residue stretch at 1099–1271 (VKRLFRVNIA…QPIILLVEFE (173 aa)) folds into the C2 PI3K-type domain. One can recognise a PIK helical domain in the interval 1326–1503 (PVGLKKLDLD…GLLLEGYLRS (178 aa)). A PI3K/PI4K catalytic domain is found at 1568-1845 (IIDKCRYMDS…NISVALNTKT (278 aa)). The interval 1574–1580 (YMDSKKL) is G-loop. Positions 1711 to 1719 (GIGDRHSDN) are catalytic loop. Residues 1730 to 1756 (HIDFGHFLGNYKKKYGFKRERAPFIFT) are activation loop.

The protein belongs to the PI3/PI4-kinase family.

The enzyme catalyses a 1,2-diacyl-sn-glycero-3-phospho-(1D-myo-inositol) + ATP = a 1,2-diacyl-sn-glycero-3-phospho-(1D-myo-inositol-3-phosphate) + ADP + H(+). This chain is Phosphatidylinositol 3-kinase 2 (pikB), found in Dictyostelium discoideum (Social amoeba).